The sequence spans 271 residues: Large ribosomal subunit protein uL2cz/uL2cy (271 aa).

Disordered stretches follow at residues 1–22 (MAKH…DRQV) and 223–271 (PVDH…RRRK).

This sequence belongs to the universal ribosomal protein uL2 family. In terms of assembly, part of the 50S ribosomal subunit.

The protein resides in the plastid. It is found in the chloroplast. This Sorghum bicolor (Sorghum) protein is Large ribosomal subunit protein uL2cz/uL2cy (rpl2-A).